A 115-amino-acid polypeptide reads, in one-letter code: Hydrogenase maturation factor HypA (115 aa).

His-2 serves as a coordination point for Ni(2+). Residues Cys-73, Cys-76, Cys-89, and Cys-92 each contribute to the Zn(2+) site.

The protein belongs to the HypA/HybF family.

Its function is as follows. Involved in the maturation of [NiFe] hydrogenases. Required for nickel insertion into the metal center of the hydrogenase. The polypeptide is Hydrogenase maturation factor HypA (Polaromonas naphthalenivorans (strain CJ2)).